Consider the following 21-residue polypeptide: Ocellatin-4 (21 aa).

At Ile-21 the chain carries Isoleucine amide.

As to expression, expressed by the skin dorsal glands.

Its subcellular location is the secreted. In terms of biological role, has hemolytic activity against human erythrocytes (HC50=14.3 uM). Has antibacterial activity against the Gram-positive bacterium S.aureus ATCC 25923 (MIC=64 uM) and the Gram-negative bacterium E.coli ATCC 25922 (MIC=64 uM). The chain is Ocellatin-4 from Leptodactylus ocellatus (Argus frog).